Here is a 192-residue protein sequence, read N- to C-terminus: Protein GrpE (192 aa).

It belongs to the GrpE family. Homodimer.

The protein localises to the cytoplasm. Functionally, participates actively in the response to hyperosmotic and heat shock by preventing the aggregation of stress-denatured proteins, in association with DnaK and GrpE. It is the nucleotide exchange factor for DnaK and may function as a thermosensor. Unfolded proteins bind initially to DnaJ; upon interaction with the DnaJ-bound protein, DnaK hydrolyzes its bound ATP, resulting in the formation of a stable complex. GrpE releases ADP from DnaK; ATP binding to DnaK triggers the release of the substrate protein, thus completing the reaction cycle. Several rounds of ATP-dependent interactions between DnaJ, DnaK and GrpE are required for fully efficient folding. This Neisseria gonorrhoeae (strain ATCC 700825 / FA 1090) protein is Protein GrpE.